The sequence spans 410 residues: DNA primase small subunit (410 aa).

Residues E43, D106, and D108 contribute to the active site. Positions 118-129 match the Zinc knuckle motif motif; the sequence is CCKDATVCPKCW.

The protein belongs to the eukaryotic-type primase small subunit family. As to quaternary structure, heterodimer of a small subunit and a large subunit.

In terms of biological role, DNA primase is the polymerase that synthesizes small RNA primers for the Okazaki fragments made during discontinuous DNA replication. The protein is DNA primase small subunit (pri-1) of Caenorhabditis elegans.